Here is a 489-residue protein sequence, read N- to C-terminus: Threonine/serine exporter (489 aa).

The next 10 helical transmembrane spans lie at 151-171 (GFPV…VLLG), 174-194 (WQVS…TSFL), 206-226 (VVGG…ALQF), 233-253 (SQII…VQSL), 268-288 (FFET…GIQL), 314-334 (IIAG…EWSS), 335-355 (VIIA…FVVY), 356-376 (LGPV…GGLL), 381-401 (LIPP…GLAI), and 420-440 (IAVA…GEWI). Residues 464-489 (FQEEAEQNQRRQRKRPKTNQRFGNKR) are disordered. A compositionally biased stretch (basic residues) spans 473–489 (RRQRKRPKTNQRFGNKR).

The protein belongs to the ThrE exporter (TC 2.A.79) family.

The protein localises to the cell membrane. It carries out the reaction L-threonine(in) + H(+)(out) = L-threonine(out) + H(+)(in). Its activity is regulated as follows. Transport is inhibited by the proton ionophore carbonyl cyanide m-chlorophenylhydrazone (CCCP). Functionally, catalyzes the export of L-threonine and L-serine from the cell to the extracellular environment. Export is dependent on the proton motive force. The protein is Threonine/serine exporter of Corynebacterium glutamicum (Brevibacterium saccharolyticum).